The chain runs to 408 residues: S-adenosylmethionine:tRNA ribosyltransferase-isomerase (408 aa).

It belongs to the QueA family. Monomer.

Its subcellular location is the cytoplasm. It carries out the reaction 7-aminomethyl-7-carbaguanosine(34) in tRNA + S-adenosyl-L-methionine = epoxyqueuosine(34) in tRNA + adenine + L-methionine + 2 H(+). It participates in tRNA modification; tRNA-queuosine biosynthesis. Functionally, transfers and isomerizes the ribose moiety from AdoMet to the 7-aminomethyl group of 7-deazaguanine (preQ1-tRNA) to give epoxyqueuosine (oQ-tRNA). The sequence is that of S-adenosylmethionine:tRNA ribosyltransferase-isomerase from Trichormus variabilis (strain ATCC 29413 / PCC 7937) (Anabaena variabilis).